A 277-amino-acid chain; its full sequence is Urease accessory protein UreD (277 aa).

The protein belongs to the UreD family. As to quaternary structure, ureD, UreF and UreG form a complex that acts as a GTP-hydrolysis-dependent molecular chaperone, activating the urease apoprotein by helping to assemble the nickel containing metallocenter of UreC. The UreE protein probably delivers the nickel.

Its subcellular location is the cytoplasm. Its function is as follows. Required for maturation of urease via the functional incorporation of the urease nickel metallocenter. In Flavobacterium johnsoniae (strain ATCC 17061 / DSM 2064 / JCM 8514 / BCRC 14874 / CCUG 350202 / NBRC 14942 / NCIMB 11054 / UW101) (Cytophaga johnsonae), this protein is Urease accessory protein UreD.